The primary structure comprises 969 residues: RNA polymerase-associated protein RapA (969 aa).

A Helicase ATP-binding domain is found at 162 to 339; it reads EVGQRVAPRV…FARLALLDAD (178 aa). 175–182 provides a ligand contact to ATP; sequence DEVGLGKT. The short motif at 285–288 is the DEAH box element; that stretch reads DEAH. The Helicase C-terminal domain occupies 492 to 663; sequence RIEWLITFLK…GFLKNPQAVG (172 aa).

It belongs to the SNF2/RAD54 helicase family. RapA subfamily. Interacts with the RNAP. Has a higher affinity for the core RNAP than for the holoenzyme. Its ATPase activity is stimulated by binding to RNAP.

Its function is as follows. Transcription regulator that activates transcription by stimulating RNA polymerase (RNAP) recycling in case of stress conditions such as supercoiled DNA or high salt concentrations. Probably acts by releasing the RNAP, when it is trapped or immobilized on tightly supercoiled DNA. Does not activate transcription on linear DNA. Probably not involved in DNA repair. The sequence is that of RNA polymerase-associated protein RapA from Actinobacillus pleuropneumoniae serotype 5b (strain L20).